Consider the following 262-residue polypeptide: Ribosomal RNA small subunit methyltransferase A (262 aa).

Asn-12, Leu-14, Gly-38, Glu-60, Asp-83, and Asn-102 together coordinate S-adenosyl-L-methionine.

It belongs to the class I-like SAM-binding methyltransferase superfamily. rRNA adenine N(6)-methyltransferase family. RsmA subfamily.

The protein localises to the cytoplasm. The enzyme catalyses adenosine(1518)/adenosine(1519) in 16S rRNA + 4 S-adenosyl-L-methionine = N(6)-dimethyladenosine(1518)/N(6)-dimethyladenosine(1519) in 16S rRNA + 4 S-adenosyl-L-homocysteine + 4 H(+). In terms of biological role, specifically dimethylates two adjacent adenosines (A1518 and A1519) in the loop of a conserved hairpin near the 3'-end of 16S rRNA in the 30S particle. May play a critical role in biogenesis of 30S subunits. This Pelagibacter ubique (strain HTCC1062) protein is Ribosomal RNA small subunit methyltransferase A.